The sequence spans 1168 residues: Pre-mRNA-splicing factor ATP-dependent RNA helicase prp22 (1168 aa).

2 disordered regions span residues 77-100 (KDDI…HDLD) and 144-197 (TLAK…RSSR). Residues 84–94 (NVNNGSNSVNG) show a composition bias toward low complexity. Over residues 149–173 (RRNDRDSRRDERHYLNGIRERRERS) the composition is skewed to basic and acidic residues. Over residues 184–197 (TSISGQSHSSRSSR) the composition is skewed to low complexity. In terms of domain architecture, S1 motif spans 207-280 (YGIYSGVVSG…SAKRISLSMK (74 aa)). Positions 287–314 (GEDLNPDQVSRSTKKGSGANAIPLSAQN) are disordered. A Helicase ATP-binding domain is found at 520 to 684 (LEAVSKNQIL…FYKCPIFTIP (165 aa)). 533–540 (GETGSGKT) serves as a coordination point for ATP. The short motif at 631-634 (DEAH) is the DEAH box element. Residues 702-882 (YLDAALMTVM…HTILMLKAMG (181 aa)) form the Helicase C-terminal domain.

Belongs to the DEAD box helicase family. DEAH subfamily. DDX8/PRP22 sub-subfamily. Belongs to the 40S cdc5-associated complex (or cwf complex), a spliceosome sub-complex reminiscent of a late-stage spliceosome composed of the U2, U5 and U6 snRNAs and at least brr2, cdc5, cwf2/prp3, cwf3/syf1, cwf4/syf3, cwf5/ecm2, spp42/cwf6, cwf7/spf27, cwf8, cwf9, cwf10, cwf11, cwf12, prp45/cwf13, cwf14, cwf15, cwf16, cwf17, cwf18, cwf19, cwf20, cwf21, cwf22, cwf23, cwf24, cwf25, cwf26, cyp7/cwf27, cwf28, cwf29/ist3, lea1, msl1, prp5/cwf1, prp10, prp12/sap130, prp17, prp22, sap61, sap62, sap114, sap145, slu7, smb1, smd1, smd3, smf1, smg1 and syf2.

The protein localises to the nucleus. The enzyme catalyses ATP + H2O = ADP + phosphate + H(+). Acts late in the splicing of pre-mRNA. Required for the splicing of introns with a branch nucleotide to 3'-splice site distance greater or equal to 15. Mediates the release of the spliced mRNA from spliceosomes. In Schizosaccharomyces pombe (strain 972 / ATCC 24843) (Fission yeast), this protein is Pre-mRNA-splicing factor ATP-dependent RNA helicase prp22 (prp22).